Here is a 737-residue protein sequence, read N- to C-terminus: Polyribonucleotide nucleotidyltransferase (737 aa).

The Mg(2+) site is built by aspartate 489 and aspartate 495. The KH domain maps to 556–615 (PKIDTIKIDVDKIKIVIGKGGETIDKIIAETGVKIDIDEEGNVSIYSSDQDAINRAKEII). Residues 625-693 (DEVYRAKVVR…EKGRIDASMK (69 aa)) enclose the S1 motif domain. The interval 691-737 (SMKALLPRPPKPEHDEKGEKSERPHRPRHQKDYKPKKEFTETPKDSE) is disordered. A compositionally biased stretch (basic and acidic residues) spans 700 to 737 (PKPEHDEKGEKSERPHRPRHQKDYKPKKEFTETPKDSE).

The protein belongs to the polyribonucleotide nucleotidyltransferase family. Mg(2+) is required as a cofactor.

The protein resides in the cytoplasm. It carries out the reaction RNA(n+1) + phosphate = RNA(n) + a ribonucleoside 5'-diphosphate. Its function is as follows. Involved in mRNA degradation. Catalyzes the phosphorolysis of single-stranded polyribonucleotides processively in the 3'- to 5'-direction. The sequence is that of Polyribonucleotide nucleotidyltransferase from Streptococcus pneumoniae serotype 2 (strain D39 / NCTC 7466).